A 678-amino-acid chain; its full sequence is Protein CASP (678 aa).

The Cytoplasmic segment spans residues 1 to 619 (MAANVGSMFQ…LVLSNKMART (619 aa)). 2 coiled-coil regions span residues 67–450 (LLKS…QDLS) and 502–556 (LSII…FLQS). Residue Ser586 is modified to Phosphoserine. A helical; Anchor for type IV membrane protein transmembrane segment spans residues 620–640 (IGFFYTLFLHCLVFLVLYKLA). The Lumenal portion of the chain corresponds to 641–678 (WSESMERDCATFCAKKFADHLHKFHENDNGAAAGDLWQ).

Belongs to the CASP family. As to quaternary structure, homodimer; disulfide-linked. Interacts with GOLGA5.

The protein resides in the golgi apparatus membrane. May be involved in intra-Golgi retrograde transport. This chain is Protein CASP (CUX1), found in Homo sapiens (Human).